Consider the following 132-residue polypeptide: Small ribosomal subunit protein bS6 (132 aa).

Positions 96–132 are disordered; that stretch reads HAEGPSIQMQKRDERERGDRGDRPDRGDRGERGGFRR. Positions 105–132 are enriched in basic and acidic residues; sequence QKRDERERGDRGDRPDRGDRGERGGFRR.

This sequence belongs to the bacterial ribosomal protein bS6 family.

Functionally, binds together with bS18 to 16S ribosomal RNA. This is Small ribosomal subunit protein bS6 from Cereibacter sphaeroides (strain ATCC 17025 / ATH 2.4.3) (Rhodobacter sphaeroides).